The chain runs to 299 residues: Biphenyl-2,3-diol 1,2-dioxygenase (299 aa).

VOC domains follow at residues 6 to 121 and 146 to 267; these read ELGY…IFYG and GIGH…FGWG. The Fe cation site is built by histidine 149, histidine 212, and glutamate 263.

The protein belongs to the extradiol ring-cleavage dioxygenase family. As to quaternary structure, homooctamer. The cofactor is Fe(2+).

It catalyses the reaction biphenyl-2,3-diol + O2 = 2-hydroxy-6-oxo-6-phenylhexa-2,4-dienoate + H(+). The protein operates within xenobiotic degradation; biphenyl degradation; 2-hydroxy-2,4-pentadienoate and benzoate from biphenyl: step 3/4. The chain is Biphenyl-2,3-diol 1,2-dioxygenase (bphC) from Sphingomonas paucimobilis (Pseudomonas paucimobilis).